The following is a 384-amino-acid chain: 8-amino-7-oxononanoate synthase (384 aa).

Position 21 (Arg21) interacts with substrate. 108–109 lines the pyridoxal 5'-phosphate pocket; the sequence is GF. His133 contributes to the substrate binding site. Positions 179, 207, and 233 each coordinate pyridoxal 5'-phosphate. N6-(pyridoxal phosphate)lysine is present on Lys236. Substrate is bound at residue Thr350.

Belongs to the class-II pyridoxal-phosphate-dependent aminotransferase family. BioF subfamily. Homodimer. Pyridoxal 5'-phosphate serves as cofactor.

It catalyses the reaction 6-carboxyhexanoyl-[ACP] + L-alanine + H(+) = (8S)-8-amino-7-oxononanoate + holo-[ACP] + CO2. Its pathway is cofactor biosynthesis; biotin biosynthesis. Functionally, catalyzes the decarboxylative condensation of pimeloyl-[acyl-carrier protein] and L-alanine to produce 8-amino-7-oxononanoate (AON), [acyl-carrier protein], and carbon dioxide. This is 8-amino-7-oxononanoate synthase from Erwinia tasmaniensis (strain DSM 17950 / CFBP 7177 / CIP 109463 / NCPPB 4357 / Et1/99).